Reading from the N-terminus, the 348-residue chain is Dihydroorotase (348 aa).

Zn(2+) is bound by residues H17 and H19. Substrate contacts are provided by residues 19–21 (HLR) and N45. Residues K103, H140, and H178 each coordinate Zn(2+). The residue at position 103 (K103) is an N6-carboxylysine. Residue H140 coordinates substrate. L223 provides a ligand contact to substrate. D251 is a Zn(2+) binding site. The active site involves D251. Substrate is bound by residues H255 and A267.

This sequence belongs to the metallo-dependent hydrolases superfamily. DHOase family. Class II DHOase subfamily. Homodimer. Zn(2+) serves as cofactor.

The enzyme catalyses (S)-dihydroorotate + H2O = N-carbamoyl-L-aspartate + H(+). Its pathway is pyrimidine metabolism; UMP biosynthesis via de novo pathway; (S)-dihydroorotate from bicarbonate: step 3/3. Its function is as follows. Catalyzes the reversible cyclization of carbamoyl aspartate to dihydroorotate. This chain is Dihydroorotase, found in Escherichia coli O7:K1 (strain IAI39 / ExPEC).